A 1108-amino-acid chain; its full sequence is DNA-directed RNA polymerase subunit beta (1108 aa).

A disordered region spans residues 1081–1108 (SPRRTPARPTIDYSALDDTDDKEGATTF).

The protein belongs to the RNA polymerase beta chain family. In cyanobacteria the RNAP catalytic core is composed of 2 alpha, 1 beta, 1 beta', 1 gamma and 1 omega subunit. When a sigma factor is associated with the core the holoenzyme is formed, which can initiate transcription.

It carries out the reaction RNA(n) + a ribonucleoside 5'-triphosphate = RNA(n+1) + diphosphate. Functionally, DNA-dependent RNA polymerase catalyzes the transcription of DNA into RNA using the four ribonucleoside triphosphates as substrates. In Thermosynechococcus vestitus (strain NIES-2133 / IAM M-273 / BP-1), this protein is DNA-directed RNA polymerase subunit beta.